Consider the following 128-residue polypeptide: uncharacterized protein (128 aa).

3 helical membrane-spanning segments follow: residues 1–21, 51–71, and 76–96; these read MLVFSFLFVVVSINLNALIFL, VRVEAIAPFMMCLGSLGAILG, and ANFLLLSYNVINNPVVLVYYV.

It is found in the membrane. This is an uncharacterized protein from Saccharomyces cerevisiae (strain ATCC 204508 / S288c) (Baker's yeast).